Here is a 529-residue protein sequence, read N- to C-terminus: CTP synthase (529 aa).

Positions 1-270 (MKYIVVTGGV…ADVVCSYLSL (270 aa)) are amidoligase domain. Ser12 is a binding site for CTP. Residue Ser12 coordinates UTP. Residues 13 to 18 (GLGKGI) and Asp70 each bind ATP. Mg(2+) contacts are provided by Asp70 and Glu145. CTP contacts are provided by residues 152 to 154 (DIE), 191 to 196 (KTKPTQ), and Lys227. Residues 191 to 196 (KTKPTQ) and Lys227 each bind UTP. Residue 243-245 (KDA) participates in ATP binding. The region spanning 293–525 (VAIVSKYGIE…VEACKKNKSS (233 aa)) is the Glutamine amidotransferase type-1 domain. Gly349 contributes to the L-glutamine binding site. Cys376 acts as the Nucleophile; for glutamine hydrolysis in catalysis. Residues 377–380 (LGFQ), Glu400, and Arg455 contribute to the L-glutamine site. Catalysis depends on residues His498 and Glu500.

This sequence belongs to the CTP synthase family. As to quaternary structure, homotetramer.

The catalysed reaction is UTP + L-glutamine + ATP + H2O = CTP + L-glutamate + ADP + phosphate + 2 H(+). The enzyme catalyses L-glutamine + H2O = L-glutamate + NH4(+). It carries out the reaction UTP + NH4(+) + ATP = CTP + ADP + phosphate + 2 H(+). The protein operates within pyrimidine metabolism; CTP biosynthesis via de novo pathway; CTP from UDP: step 2/2. With respect to regulation, allosterically activated by GTP, when glutamine is the substrate; GTP has no effect on the reaction when ammonia is the substrate. The allosteric effector GTP functions by stabilizing the protein conformation that binds the tetrahedral intermediate(s) formed during glutamine hydrolysis. Inhibited by the product CTP, via allosteric rather than competitive inhibition. Catalyzes the ATP-dependent amination of UTP to CTP with either L-glutamine or ammonia as the source of nitrogen. Regulates intracellular CTP levels through interactions with the four ribonucleotide triphosphates. The polypeptide is CTP synthase (Methanoculleus marisnigri (strain ATCC 35101 / DSM 1498 / JR1)).